Consider the following 308-residue polypeptide: Serine/threonine-protein phosphatase 4 catalytic subunit (308 aa).

Residues aspartate 51, histidine 53, aspartate 79, and asparagine 111 each contribute to the Mn(2+) site. Histidine 112 functions as the Proton donor in the catalytic mechanism. The Mn(2+) site is built by histidine 161 and histidine 235.

This sequence belongs to the PPP phosphatase family. PP-4 (PP-X) subfamily. Catalytic subunit of the histone H2A phosphatase complex (HTP-C) containing PPH3, PSY2 and PSY4. Inactivated in a complex with phosphatase methylesterase PPE1 (PP2Ai). Interacts with phosphatase 2A activator RRD1, which can reactivate PP2Ai by dissociating the catalytic subunit from the complex. Interacts with SPT5 and TAP42. Mn(2+) serves as cofactor. Reversibly methyl esterified on Leu-308 by leucine carboxyl methyltransferase 1 (PPM1) and protein phosphatase methylesterase 1 (PPE1). Carboxyl methylation influences the affinity of the catalytic subunit for the different regulatory subunits, thereby modulating the PP2A holoenzyme's substrate specificity, enzyme activity and cellular localization.

The protein localises to the cytoplasm. It localises to the nucleus. The enzyme catalyses O-phospho-L-seryl-[protein] + H2O = L-seryl-[protein] + phosphate. It catalyses the reaction O-phospho-L-threonyl-[protein] + H2O = L-threonyl-[protein] + phosphate. Functionally, forms the histone H2A phosphatase complex in association with the regulatory subunits PSY2 and PSY4, which dephosphorylates H2AS128ph (gamma-H2A) that has been displaced from sites of DNA lesions in the double-stranded DNA break repair process. Dephosphorylation is necessary for efficient recovery from the DNA damage checkpoint. PPH3 is directly involved in the dephosphorylation and activation of the transcription factor GLN3 in response to nutrient availability. This is Serine/threonine-protein phosphatase 4 catalytic subunit (PPH3) from Saccharomyces cerevisiae (strain ATCC 204508 / S288c) (Baker's yeast).